We begin with the raw amino-acid sequence, 108 residues long: Glutaredoxin 4 (108 aa).

Residues 4 to 106 (FQKIKKQIQD…KLILKVKKKY (103 aa)) enclose the Glutaredoxin domain. Lysine 21 serves as a coordination point for glutathione. [2Fe-2S] cluster is bound at residue cysteine 29. Residues arginine 58, phenylalanine 70, and 83-84 (CS) each bind glutathione.

It belongs to the glutaredoxin family. Monothiol subfamily. As to quaternary structure, homodimer.

It is found in the cytoplasm. In terms of biological role, monothiol glutaredoxin involved in the biogenesis of iron-sulfur clusters. The sequence is that of Glutaredoxin 4 (grxD) from Buchnera aphidicola subsp. Acyrthosiphon pisum (strain APS) (Acyrthosiphon pisum symbiotic bacterium).